A 397-amino-acid chain; its full sequence is 4-hydroxyphenylpyruvate dioxygenase (397 aa).

2 VOC domains span residues asparagine 18–tyrosine 149 and phenylalanine 181–lysine 339. The Fe cation site is built by histidine 184, histidine 267, and glutamate 350.

Belongs to the 4HPPD family. In terms of assembly, homodimer. Requires Fe cation as cofactor.

It is found in the cytoplasm. The protein resides in the endoplasmic reticulum membrane. The protein localises to the golgi apparatus membrane. The enzyme catalyses 3-(4-hydroxyphenyl)pyruvate + O2 = homogentisate + CO2. It functions in the pathway amino-acid degradation; L-phenylalanine degradation; acetoacetate and fumarate from L-phenylalanine: step 3/6. Catalyzes the conversion of 4-hydroxyphenylpyruvic acid to homogentisic acid, one of the steps in tyrosine catabolism. In Danio rerio (Zebrafish), this protein is 4-hydroxyphenylpyruvate dioxygenase (hpd).